The sequence spans 258 residues: Pimeloyl-[acyl-carrier protein] methyl ester esterase (258 aa).

Positions 16 to 241 (LVLLHGWGLN…GSAHAPFVSH (226 aa)) constitute an AB hydrolase-1 domain. Residues Trp-22, 82–83 (SM), and 143–147 (FLALQ) each bind substrate. Residue Ser-82 is the Nucleophile of the active site. Active-site residues include Asp-207 and His-235. His-235 is a substrate binding site.

The protein belongs to the AB hydrolase superfamily. Carboxylesterase BioH family. In terms of assembly, monomer.

It localises to the cytoplasm. The enzyme catalyses 6-carboxyhexanoyl-[ACP] methyl ester + H2O = 6-carboxyhexanoyl-[ACP] + methanol + H(+). Its pathway is cofactor biosynthesis; biotin biosynthesis. Functionally, the physiological role of BioH is to remove the methyl group introduced by BioC when the pimeloyl moiety is complete. It allows to synthesize pimeloyl-ACP via the fatty acid synthetic pathway through the hydrolysis of the ester bonds of pimeloyl-ACP esters. This is Pimeloyl-[acyl-carrier protein] methyl ester esterase from Yersinia enterocolitica serotype O:8 / biotype 1B (strain NCTC 13174 / 8081).